A 288-amino-acid chain; its full sequence is Energy-coupling factor transporter ATP-binding protein EcfA2 (288 aa).

Residues 3–246 (IKLEQLGYCY…PDELVDLGLS (244 aa)) form the ABC transporter domain. 40–47 (GHTGSGKS) is a binding site for ATP.

This sequence belongs to the ABC transporter superfamily. Energy-coupling factor EcfA family. Forms a stable energy-coupling factor (ECF) transporter complex composed of 2 membrane-embedded substrate-binding proteins (S component), 2 ATP-binding proteins (A component) and 2 transmembrane proteins (T component).

The protein localises to the cell membrane. Its function is as follows. ATP-binding (A) component of a common energy-coupling factor (ECF) ABC-transporter complex. Unlike classic ABC transporters this ECF transporter provides the energy necessary to transport a number of different substrates. The protein is Energy-coupling factor transporter ATP-binding protein EcfA2 of Listeria innocua serovar 6a (strain ATCC BAA-680 / CLIP 11262).